The following is a 360-amino-acid chain: Lactosylceramide 4-alpha-galactosyltransferase (360 aa).

Residues 1–30 lie on the Cytoplasmic side of the membrane; it reads MGISRSDLEETMSKPPDCLPRMLRGTPRQR. The helical; Signal-anchor for type II membrane protein transmembrane segment at 31-51 threads the bilayer; the sequence is VFTLFIISFKFTFLVSILIYW. The Lumenal portion of the chain corresponds to 52–360; that stretch reads HTVGAPKDQR…TTHRAMTMYL (309 aa). A DXD motif motif is present at residues 199 to 201; it reads DTD. N-linked (GlcNAc...) asparagine glycans are attached at residues asparagine 210 and asparagine 316.

The protein belongs to the glycosyltransferase 32 family. In terms of tissue distribution, ubiquitous. Highly expressed in kidney, mesenteric lymph node, spleen and brain.

The protein resides in the golgi apparatus membrane. The catalysed reaction is a beta-D-Gal-(1-&gt;4)-beta-D-Glc-(1&lt;-&gt;1)-Cer(d18:1(4E)) + UDP-alpha-D-galactose = a globoside Gb3Cer (d18:1(4E)) + UDP + H(+). The enzyme catalyses a beta-D-Gal-(1&lt;-&gt;1')-ceramide + UDP-alpha-D-galactose = alpha-D-Gal-(1-&gt;4)-beta-D-Gal-(1&lt;-&gt;1')-Cer + UDP + H(+). It functions in the pathway glycolipid biosynthesis. Functionally, catalyzes the transfer of galactose from UDP-alpha-D-galactose to lactosylceramide/beta-D-galactosyl-(1-&gt;4)-beta-D-glucosyl-(1&lt;-&gt;1)-ceramide(d18:1(4E)) to produce globotriaosylceramide/globoside Gb3Cer (d18:1(4E)). Also able to transfer galactose to galactosylceramide/beta-D-Gal-(1&lt;-&gt;1')-Cer. Globoside Gb3Cer is a glycosphingolipid of the globo serie, one of the major types of neutral root structures of glycosphingolipids, that constitute a significant portion of mammalian cell membranes. The sequence is that of Lactosylceramide 4-alpha-galactosyltransferase from Rattus norvegicus (Rat).